The following is a 212-amino-acid chain: Large ribosomal subunit protein uL1 (212 aa).

The protein belongs to the universal ribosomal protein uL1 family. As to quaternary structure, part of the 50S ribosomal subunit.

Its function is as follows. Binds directly to 23S rRNA. Probably involved in E site tRNA release. In terms of biological role, protein L1 is also a translational repressor protein, it controls the translation of its operon by binding to its mRNA. This Natronomonas pharaonis (strain ATCC 35678 / DSM 2160 / CIP 103997 / JCM 8858 / NBRC 14720 / NCIMB 2260 / Gabara) (Halobacterium pharaonis) protein is Large ribosomal subunit protein uL1.